The following is a 314-amino-acid chain: WD repeat-containing protein 38 (314 aa).

WD repeat units follow at residues 19-58 (QHGG…LLWR), 61-100 (GHTG…CLRV), 103-142 (GHQR…MLRL), 145-184 (GHRD…PAVS), 190-228 (GHSA…LLIQ), 231-272 (GHVT…ETLK), and 274-312 (VLDV…PRDP). Residues 294-314 (AADQTRRQISRTSKSPRDPQT) are disordered.

In Homo sapiens (Human), this protein is WD repeat-containing protein 38 (WDR38).